A 160-amino-acid chain; its full sequence is Cytochrome b6-f complex subunit 4 (160 aa).

The next 3 helical transmembrane spans lie at 36-56 (ILFT…GLAI), 95-115 (LLGI…PFIE), and 131-151 (AVFL…CFPI).

This sequence belongs to the cytochrome b family. PetD subfamily. The 4 large subunits of the cytochrome b6-f complex are cytochrome b6, subunit IV (17 kDa polypeptide, PetD), cytochrome f and the Rieske protein, while the 4 small subunits are PetG, PetL, PetM and PetN. The complex functions as a dimer.

It is found in the cellular thylakoid membrane. Functionally, component of the cytochrome b6-f complex, which mediates electron transfer between photosystem II (PSII) and photosystem I (PSI), cyclic electron flow around PSI, and state transitions. This is Cytochrome b6-f complex subunit 4 from Picosynechococcus sp. (strain ATCC 27264 / PCC 7002 / PR-6) (Agmenellum quadruplicatum).